The primary structure comprises 165 residues: uncharacterized protein (165 aa).

A disordered region spans residues 53-123 (CSEKTGSAPN…PAPSSGRQGG (71 aa)). Positions 58 to 71 (GSAPNPGSSAPAPA) are enriched in low complexity.

This is an uncharacterized protein from Treponema pallidum (strain Nichols).